Here is a 1243-residue protein sequence, read N- to C-terminus: Membrane-associated phosphatidylinositol transfer protein 1 (1243 aa).

Phosphothreonine is present on residues threonine 59, threonine 282, and threonine 287. The disordered stretch occupies residues 259–330 (CNTGSEGPEA…HGGGVSPQSL (72 aa)). Polar residues predominate over residues 271–283 (PGKSSTEARPGTS). Over residues 299–319 (ASPDASFGKQWSSSSRSSYSS) the composition is skewed to low complexity. Serine 300, serine 304, serine 319, serine 326, serine 329, serine 342, serine 345, serine 346, and serine 373 each carry phosphoserine. Serine 382 carries the post-translational modification Phosphoserine; by CDK1. Residues 581-593 (AGPGSRGSSRRGS) are compositionally biased toward low complexity. The disordered stretch occupies residues 581–679 (AGPGSRGSSR…PASSEAPDGP (99 aa)). A phosphoserine mark is found at serine 593, serine 600, and serine 621. Over residues 643–658 (GSQNSLQVASTATSSG) the composition is skewed to polar residues. In terms of domain architecture, DDHD spans 684 to 878 (RLDFKVSGFF…VVAFILRQVI (195 aa)). Serine 895 carries the phosphoserine modification. Positions 1206-1243 (LLRSRGPSQVDREGPGTPPTTLARGKTRSISLKLDSEE) are disordered. 2 positions are modified to omega-N-methylarginine: arginine 1210 and arginine 1217. The residue at position 1236 (serine 1236) is a Phosphoserine.

Belongs to the PtdIns transfer protein family. PI transfer class IIA subfamily. As to quaternary structure, interacts with PTK2B via its C-terminus. Interacts with RHOA. Has higher affinity for the inactive, GDP-bound form of RHOA. The CDK1-phosphorylated form interacts with PLK1. Interacts with VAPB and PIK4CA. In terms of processing, phosphorylated on multiple sites by CDK1 at the onset of mitosis. Phosphorylation facilitates dissociation from the Golgi complex and is required for interaction with PLK1. Phosphorylated on threonine residues upon treatment with oleic acid. Post-translationally, phosphorylated on tyrosine residues by PTK2B. In terms of tissue distribution, detected at high levels in brain, and at lower levels in lung, kidney, spleen and liver (at protein level). Ubiquitous. Highly expressed in embryonic retina and the central nervous system.

It is found in the cytoplasm. It localises to the golgi apparatus. Its subcellular location is the golgi stack membrane. The protein resides in the endoplasmic reticulum membrane. The protein localises to the lipid droplet. It is found in the cleavage furrow. It localises to the midbody. The catalysed reaction is a 1,2-diacyl-sn-glycero-3-phospho-(1D-myo-inositol)(in) = a 1,2-diacyl-sn-glycero-3-phospho-(1D-myo-inositol)(out). Catalyzes the transfer of phosphatidylinositol (PI) between membranes. Binds PI. Also binds phosphatidylcholine (PC) and phosphatidic acid (PA) with the binding affinity order of PI &gt; PA &gt; PC. Regulates RHOA activity, and plays a role in cytoskeleton remodeling. Necessary for normal completion of cytokinesis. Plays a role in maintaining normal diacylglycerol levels in the Golgi apparatus. Necessary for maintaining the normal structure of the endoplasmic reticulum and the Golgi apparatus. Required for protein export from the endoplasmic reticulum and the Golgi. Binds calcium ions. The polypeptide is Membrane-associated phosphatidylinositol transfer protein 1 (Pitpnm1) (Mus musculus (Mouse)).